The following is a 688-amino-acid chain: Translation initiation factor IF-2 (688 aa).

2 stretches are compositionally biased toward basic and acidic residues: residues 53–62 (GKEKSEKTKE) and 86–95 (KRDDKNEKVN). The segment at 53–100 (GKEKSEKTKEEDDEIETTAKNPIKESMNNKKSNKRDDKNEKVNTENAE) is disordered. The region spanning 187 to 354 (KRSPIITVMG…MILLSSEILE (168 aa)) is the tr-type G domain. Residues 196–203 (GHVDHGKT) are G1. Residue 196 to 203 (GHVDHGKT) participates in GTP binding. A G2 region spans residues 221–225 (GITQH). The tract at residues 242–245 (DTPG) is G3. GTP-binding positions include 242–246 (DTPGH) and 296–299 (NKID). The interval 296–299 (NKID) is G4. The segment at 332–334 (SAH) is G5.

This sequence belongs to the TRAFAC class translation factor GTPase superfamily. Classic translation factor GTPase family. IF-2 subfamily.

The protein resides in the cytoplasm. One of the essential components for the initiation of protein synthesis. Protects formylmethionyl-tRNA from spontaneous hydrolysis and promotes its binding to the 30S ribosomal subunits. Also involved in the hydrolysis of GTP during the formation of the 70S ribosomal complex. In Clostridium botulinum (strain ATCC 19397 / Type A), this protein is Translation initiation factor IF-2.